The chain runs to 410 residues: Polyprenol-phosphate-mannose-dependent alpha-(1-2)-phosphatidylinositol pentamannoside mannosyltransferase (410 aa).

Transmembrane regions (helical) follow at residues 31–51 (LAPMLLVVSILARLAWTYLVP), 96–116 (FAAIVFYPLHLLPFGVVAFIW), 160–180 (TFDYGQVNVVLVLAVLCAVST), 188–208 (LLVGLAAGIKLTPAVAGLYFL), 214–234 (AAVACSAAVFFATVGVSWLVV), 276–296 (GFGPLVLIGIGITAVLALLAW), 306–326 (LGGILVVSLFGLVLSPISWTH), 328–348 (WVWLIPLMMWLLHGPLSALRG), 351–371 (ILGWGWLALTLLGVPWLLSFA), and 384–404 (LAWAGLVYIVATLATLGWIAF).

This sequence belongs to the glycosyltransferase 87 family.

The protein resides in the cell membrane. Its pathway is phospholipid metabolism; phosphatidylinositol metabolism. Functionally, catalyzes the alpha-1,2 addition of a mannose residue from polyprenol-phosphate-mannose (PPM) to a monoacyl phosphatidylinositol tetramannoside (AcPIM4) to generate a monoacyl phosphatidylinositol pentamannoside (AcPIM5). This Mycolicibacterium smegmatis (strain ATCC 700084 / mc(2)155) (Mycobacterium smegmatis) protein is Polyprenol-phosphate-mannose-dependent alpha-(1-2)-phosphatidylinositol pentamannoside mannosyltransferase.